The primary structure comprises 187 residues: Probable chorismate pyruvate-lyase (187 aa).

3 residues coordinate substrate: arginine 80, leucine 117, and glutamate 176.

Belongs to the UbiC family.

It localises to the cytoplasm. The enzyme catalyses chorismate = 4-hydroxybenzoate + pyruvate. It participates in cofactor biosynthesis; ubiquinone biosynthesis. Its function is as follows. Removes the pyruvyl group from chorismate, with concomitant aromatization of the ring, to provide 4-hydroxybenzoate (4HB) for the ubiquinone pathway. In Halorhodospira halophila (strain DSM 244 / SL1) (Ectothiorhodospira halophila (strain DSM 244 / SL1)), this protein is Probable chorismate pyruvate-lyase.